A 479-amino-acid polypeptide reads, in one-letter code: Ammonium transporter Rh type C (479 aa).

The Cytoplasmic portion of the chain corresponds to Met-1–Trp-9. A helical transmembrane segment spans residues Arg-10–Val-30. The Extracellular segment spans residues Arg-31–Tyr-60. Asn-48 carries an N-linked (GlcNAc...) asparagine glycan. A helical membrane pass occupies residues Pro-61–Leu-81. Residues Gln-82 to Gly-85 lie on the Cytoplasmic side of the membrane. A helical membrane pass occupies residues Phe-86–Met-106. The Extracellular portion of the chain corresponds to Gln-107–Glu-123. Residues Asn-124–Gly-144 form a helical membrane-spanning segment. At Lys-145 to Pro-148 the chain is on the cytoplasmic side. Residues Ile-149–Leu-169 form a helical membrane-spanning segment. The Extracellular portion of the chain corresponds to Leu-170–Asp-177. Residues Ala-178–Tyr-200 form a helical membrane-spanning segment. Residues Arg-201 to Asp-218 are Cytoplasmic-facing. Residues Leu-219 to Ile-239 traverse the membrane as a helical segment. Residues Ser-240 to Ala-250 are Extracellular-facing. Residues Ile-251–Leu-271 traverse the membrane as a helical segment. Residues His-272 to His-281 are Cytoplasmic-facing. The chain crosses the membrane as a helical span at residues Ile-282–Met-302. Position 303 (Pro-303) is a topological domain, extracellular. The chain crosses the membrane as a helical span at residues Tyr-304–Leu-324. Over Thr-325–Gly-345 the chain is Cytoplasmic. The chain crosses the membrane as a helical span at residues Ile-346 to Val-366. At Tyr-367–Gln-394 the chain is on the extracellular side. The chain crosses the membrane as a helical span at residues Ile-395–Ile-415. Topologically, residues Leu-416–Pro-479 are cytoplasmic.

It belongs to the ammonium transporter (TC 2.A.49) family. Rh subfamily. Homotrimer. Post-translationally, N-glycosylated.

It localises to the cell membrane. Its subcellular location is the apical cell membrane. It carries out the reaction NH4(+)(in) = NH4(+)(out). It catalyses the reaction methylamine(out) = methylamine(in). The catalysed reaction is CO2(out) = CO2(in). In terms of biological role, ammonium transporter involved in the maintenance of acid-base homeostasis. Transports ammonium and its related derivative methylammonium across the plasma membrane of epithelial cells likely contributing to renal transepithelial ammonia transport and ammonia metabolism. Postulated to primarily mediate an electroneutral bidirectional transport of NH3 ammonia species according to a mechanism that implies interaction of an NH4(+) ion with acidic residues of the pore entry followed by dissociation of NH4(+) into NH3 and H(+). As a result NH3 transits through the central pore and is protonated on the extracellular side reforming NH4(+). May act as a CO2 channel providing for renal acid secretion. The sequence is that of Ammonium transporter Rh type C (RHCG) from Pan troglodytes (Chimpanzee).